Reading from the N-terminus, the 115-residue chain is Protein translation factor SUI1 homolog (115 aa).

The protein belongs to the SUI1 family.

Its function is as follows. Probably involved in translation. The protein is Protein translation factor SUI1 homolog of Sporobolus stapfianus (Ressurection grass).